A 92-amino-acid polypeptide reads, in one-letter code: Large ribosomal subunit protein eL43 (92 aa).

The segment at 39–60 (CEFCGKYAVKRKAVGIWGCKAC) adopts a C4-type zinc-finger fold.

It belongs to the eukaryotic ribosomal protein eL43 family.

This Gossypium hirsutum (Upland cotton) protein is Large ribosomal subunit protein eL43 (RPL37A).